We begin with the raw amino-acid sequence, 201 residues long: Ras-related protein Rab-1B (201 aa).

N-acetylmethionine is present on methionine 1. GTP is bound by residues serine 17, glycine 18, valine 19, glycine 20, lysine 21, serine 22, cysteine 23, tyrosine 33, threonine 34, glutamate 35, serine 36, serine 39, and threonine 40. Serine 22 provides a ligand contact to Mg(2+). The Switch 1 motif lies at 30 to 45 (DDTYTESYISTIGVDF). Threonine 40 and aspartate 63 together coordinate Mg(2+). The segment at 64–83 (TAGQERFRTITSSYYRGAHG) is switch 2 region; Required for interaction with REP1/CHM. The Switch 2 signature appears at 65–80 (AGQERFRTITSSYYRG). GTP is bound by residues glycine 66, asparagine 121, lysine 122, aspartate 124, serine 151, alanine 152, and lysine 153. Residues 173-201 (MGPGAASGGERPNLKIDSTPVKQAGGGCC) form a disordered region. S-geranylgeranyl cysteine attachment occurs at residues cysteine 200 and cysteine 201. Cysteine 201 is subject to Cysteine methyl ester.

The protein belongs to the small GTPase superfamily. Rab family. Interacts with MICAL1 and MICAL2. Interacts (in GTP-bound form) with MICALCL, MICAL1 and MILCAL3. Interacts with GDI1; the interaction requires the GDP-bound state. Interacts with CHM/REP1; the interaction requires the GDP-bound form and is necessary for prenylation by GGTase II. Interacts with RabGAP TBC1D20. Interacts (in GDP-bound form) with lipid phosphatase MTMR6 (via GRAM domain); the interaction regulates MTMR6 recruitment to the endoplasmic reticulum-Golgi intermediate compartment. Interacts (in GDP-bound form) with lipid phosphatase MTMR7. The cofactor is Mg(2+). Post-translationally, prenylated; by GGTase II, only after interaction of the substrate with Rab escort protein 1 (REP1).

The protein resides in the cytoplasm. The protein localises to the membrane. Its subcellular location is the preautophagosomal structure membrane. It is found in the perinuclear region. It catalyses the reaction GTP + H2O = GDP + phosphate + H(+). Regulated by guanine nucleotide exchange factors (GEFs) which promote the exchange of bound GDP for free GTP. Regulated by GTPase activating proteins (GAPs) including TBC1D20 which increases the GTP hydrolysis activity. Inhibited by GDP dissociation inhibitors (GDIs). Its function is as follows. The small GTPases Rab are key regulators of intracellular membrane trafficking, from the formation of transport vesicles to their fusion with membranes. Rabs cycle between an inactive GDP-bound form and an active GTP-bound form that is able to recruit to membranes different set of downstream effectors directly responsible for vesicle formation, movement, tethering and fusion. Plays a role in the initial events of the autophagic vacuole development which take place at specialized regions of the endoplasmic reticulum. Regulates vesicular transport between the endoplasmic reticulum and successive Golgi compartments. Required to modulate the compacted morphology of the Golgi. Promotes the recruitment of lipid phosphatase MTMR6 to the endoplasmic reticulum-Golgi intermediate compartment. This is Ras-related protein Rab-1B (RAB1B) from Bos taurus (Bovine).